We begin with the raw amino-acid sequence, 576 residues long: MAGUK p55 subfamily member 7 (576 aa).

2 L27 domains span residues 10–63 and 65–122; these read SDTG…YEKE and PMPV…YDPV. A PDZ domain is found at 139-220; it reads IIRLVKNREP…AITFKIIPSI (82 aa). Positions 228 to 298 constitute an SH3 domain; it reads DGKMFVKALF…PSKQFQERRF (71 aa). Residues 368 to 560 form the Guanylate kinase-like domain; sequence YRLVILVGPV…AYNELRSTLE (193 aa).

Belongs to the MAGUK family.

The protein localises to the membrane. The protein resides in the cell junction. It localises to the tight junction. Its subcellular location is the adherens junction. Functionally, acts as an important adapter that promotes epithelial cell polarity and tight junction formation. Involved in the assembly of protein complexes at sites of cell-cell contact. The sequence is that of MAGUK p55 subfamily member 7 (mpp7) from Xenopus tropicalis (Western clawed frog).